The chain runs to 353 residues: GDSL esterase/lipase APG (353 aa).

The N-terminal stretch at 1-25 (MDRCTSSFLLLTLVSTLSILQISFA) is a signal peptide. The Nucleophile role is filled by serine 37. Asparagine 197 and asparagine 320 each carry an N-linked (GlcNAc...) asparagine glycan. Catalysis depends on residues aspartate 328 and histidine 331.

It belongs to the 'GDSL' lipolytic enzyme family.

The protein resides in the secreted. This chain is GDSL esterase/lipase APG (APG), found in Arabidopsis thaliana (Mouse-ear cress).